Here is a 503-residue protein sequence, read N- to C-terminus: AMP phosphorylase (503 aa).

AMP contacts are provided by residues Gly-168, 194–199 (SRAITG), and Ser-203. Asp-256 serves as the catalytic Proton donor. AMP contacts are provided by Ser-264 and Lys-288.

Belongs to the thymidine/pyrimidine-nucleoside phosphorylase family. Type 2 subfamily.

The catalysed reaction is AMP + phosphate = alpha-D-ribose 1,5-bisphosphate + adenine. It carries out the reaction CMP + phosphate = cytosine + alpha-D-ribose 1,5-bisphosphate. The enzyme catalyses UMP + phosphate = alpha-D-ribose 1,5-bisphosphate + uracil. Functionally, catalyzes the conversion of AMP and phosphate to adenine and ribose 1,5-bisphosphate (R15P). Exhibits phosphorylase activity toward CMP and UMP in addition to AMP. Functions in an archaeal AMP degradation pathway, together with R15P isomerase and RubisCO. This chain is AMP phosphorylase, found in Methanocella arvoryzae (strain DSM 22066 / NBRC 105507 / MRE50).